Here is a 268-residue protein sequence, read N- to C-terminus: Interleukin-2 receptor subunit alpha (268 aa).

The signal sequence occupies residues 1–21 (MEPCLLMWGILTFITVSGYTT). A Sushi 1 domain is found at 22–81 (DLCDDDPPNLKHATFKALTYKTGTVLNCDCERGFRRISSYMHCTGNSSHASWENKCRCKS). Residues 22 to 237 (DLCDDDPPNL…ESFIFTTEYQ (216 aa)) are Extracellular-facing. 3 cysteine pairs are disulfide-bonded: Cys-24-Cys-64, Cys-49-Cys-77, and Cys-51-Cys-79. The N-linked (GlcNAc...) asparagine glycan is linked to Asn-67. A disordered region spans residues 83–112 (SPENRKGKVTTKPEEQKGENPTEMQSQTPP). Residues 85–102 (ENRKGKVTTKPEEQKGEN) are compositionally biased toward basic and acidic residues. The Sushi 2 domain occupies 120-183 (GHCREPPPWE…WTQPPLKCIS (64 aa)). Cystine bridges form between Cys-122-Cys-165 and Cys-149-Cys-181. The interval 186 to 213 (QFPDDEELQASTDAPAGRDTSSPFITTS) is disordered. A compositionally biased stretch (polar residues) spans 204-213 (DTSSPFITTS). The chain crosses the membrane as a helical span at residues 238 to 258 (IAVASCVLLLISIVLLSGLTW). Residues 259-268 (QRRRRKSRTI) lie on the Cytoplasmic side of the membrane.

In terms of assembly, non-covalent dimer of an alpha and a beta subunit. IL2R exists in 3 different forms: a high affinity dimer, an intermediate affinity monomer (beta subunit), and a low affinity monomer (alpha subunit). The high and intermediate affinity forms also associate with a gamma subunit.

The protein localises to the membrane. Functionally, receptor for interleukin-2. The receptor is involved in the regulation of immune tolerance by controlling regulatory T cells (TREGs) activity. TREGs suppress the activation and expansion of autoreactive T-cells. In Canis lupus familiaris (Dog), this protein is Interleukin-2 receptor subunit alpha (IL2RA).